We begin with the raw amino-acid sequence, 235 residues long: Probable 2-phosphosulfolactate phosphatase (235 aa).

This sequence belongs to the ComB family. The cofactor is Mg(2+).

It catalyses the reaction (2R)-O-phospho-3-sulfolactate + H2O = (2R)-3-sulfolactate + phosphate. The chain is Probable 2-phosphosulfolactate phosphatase from Clostridium novyi (strain NT).